Reading from the N-terminus, the 264-residue chain is uncharacterized protein (264 aa).

The next 6 helical transmembrane spans lie at 23 to 43 (LIFL…TALI), 59 to 79 (FDTF…YYFL), 91 to 111 (LVLS…FYAL), 150 to 170 (FSEL…VGLL), 190 to 210 (AGIY…LNVW), and 233 to 253 (WIWS…LFVI).

Its subcellular location is the cell membrane. This is an uncharacterized protein from Mycoplasma genitalium (strain ATCC 33530 / DSM 19775 / NCTC 10195 / G37) (Mycoplasmoides genitalium).